The following is a 331-amino-acid chain: Ketol-acid reductoisomerase (NADP(+)) (331 aa).

The region spanning 2-181 (LEKYYDKDAD…GATRAVVFET (180 aa)) is the KARI N-terminal Rossmann domain. NADP(+) contacts are provided by residues 25-28 (YGSQ), R48, S52, and 82-85 (DEQQ). The active site involves H107. NADP(+) is bound at residue G133. Residues 182–327 (SFREETETDL…KEIRATMPQF (146 aa)) form the KARI C-terminal knotted domain. The Mg(2+) site is built by D190, E194, E226, and E230. A substrate-binding site is contributed by S251.

The protein belongs to the ketol-acid reductoisomerase family. Requires Mg(2+) as cofactor.

It carries out the reaction (2R)-2,3-dihydroxy-3-methylbutanoate + NADP(+) = (2S)-2-acetolactate + NADPH + H(+). The enzyme catalyses (2R,3R)-2,3-dihydroxy-3-methylpentanoate + NADP(+) = (S)-2-ethyl-2-hydroxy-3-oxobutanoate + NADPH + H(+). The protein operates within amino-acid biosynthesis; L-isoleucine biosynthesis; L-isoleucine from 2-oxobutanoate: step 2/4. It participates in amino-acid biosynthesis; L-valine biosynthesis; L-valine from pyruvate: step 2/4. In terms of biological role, involved in the biosynthesis of branched-chain amino acids (BCAA). Catalyzes an alkyl-migration followed by a ketol-acid reduction of (S)-2-acetolactate (S2AL) to yield (R)-2,3-dihydroxy-isovalerate. In the isomerase reaction, S2AL is rearranged via a Mg-dependent methyl migration to produce 3-hydroxy-3-methyl-2-ketobutyrate (HMKB). In the reductase reaction, this 2-ketoacid undergoes a metal-dependent reduction by NADPH to yield (R)-2,3-dihydroxy-isovalerate. In Methanospirillum hungatei JF-1 (strain ATCC 27890 / DSM 864 / NBRC 100397 / JF-1), this protein is Ketol-acid reductoisomerase (NADP(+)).